Here is a 333-residue protein sequence, read N- to C-terminus: MPPTVNMGIPGAASSVVERTAGKRVLLAEPRGYCAGVDRAVETVERALEKHGAPIYVRHEIVHNRYVVDTLAKAGAIFVEQTDEVPEGAIVVFSAHGVAPTVHVEAAARNLKTIDATCPLVTKVHNEAKRFARDDYDILLVGHEGHEEVVGTAGEAPDHVQVVDNPDAVDNVVVRDPNKVIWLSQTTLSVDETMETVRRLREKFPTLQDPPSDDICYATQNRQVAVKAMAPECELVIVVGSKNSSNSVRLVEVALGAGSRAAHLVDYAEDIDPAWLDGVTTVGVTSGASVPEILVRGVLDRLAEHGFDTVQPVTTANETLVFALPREIRPARA.

Cys34 serves as a coordination point for [4Fe-4S] cluster. Positions 63 and 96 each coordinate (2E)-4-hydroxy-3-methylbut-2-enyl diphosphate. Dimethylallyl diphosphate is bound by residues His63 and His96. Isopentenyl diphosphate is bound by residues His63 and His96. Cys118 provides a ligand contact to [4Fe-4S] cluster. His146 contributes to the (2E)-4-hydroxy-3-methylbut-2-enyl diphosphate binding site. Dimethylallyl diphosphate is bound at residue His146. His146 is a binding site for isopentenyl diphosphate. Glu148 serves as the catalytic Proton donor. Residue Thr186 coordinates (2E)-4-hydroxy-3-methylbut-2-enyl diphosphate. Position 216 (Cys216) interacts with [4Fe-4S] cluster. The (2E)-4-hydroxy-3-methylbut-2-enyl diphosphate site is built by Ser244, Ser245, Asn246, and Ser289. 4 residues coordinate dimethylallyl diphosphate: Ser244, Ser245, Asn246, and Ser289. Ser244, Ser245, Asn246, and Ser289 together coordinate isopentenyl diphosphate.

Belongs to the IspH family. It depends on [4Fe-4S] cluster as a cofactor.

It catalyses the reaction isopentenyl diphosphate + 2 oxidized [2Fe-2S]-[ferredoxin] + H2O = (2E)-4-hydroxy-3-methylbut-2-enyl diphosphate + 2 reduced [2Fe-2S]-[ferredoxin] + 2 H(+). It carries out the reaction dimethylallyl diphosphate + 2 oxidized [2Fe-2S]-[ferredoxin] + H2O = (2E)-4-hydroxy-3-methylbut-2-enyl diphosphate + 2 reduced [2Fe-2S]-[ferredoxin] + 2 H(+). It functions in the pathway isoprenoid biosynthesis; dimethylallyl diphosphate biosynthesis; dimethylallyl diphosphate from (2E)-4-hydroxy-3-methylbutenyl diphosphate: step 1/1. Its pathway is isoprenoid biosynthesis; isopentenyl diphosphate biosynthesis via DXP pathway; isopentenyl diphosphate from 1-deoxy-D-xylulose 5-phosphate: step 6/6. Its function is as follows. Catalyzes the conversion of 1-hydroxy-2-methyl-2-(E)-butenyl 4-diphosphate (HMBPP) into a mixture of isopentenyl diphosphate (IPP) and dimethylallyl diphosphate (DMAPP). Acts in the terminal step of the DOXP/MEP pathway for isoprenoid precursor biosynthesis. The polypeptide is 4-hydroxy-3-methylbut-2-enyl diphosphate reductase (Mycolicibacterium gilvum (strain PYR-GCK) (Mycobacterium gilvum (strain PYR-GCK))).